Reading from the N-terminus, the 62-residue chain is Large ribosomal subunit protein bL28 (62 aa).

Belongs to the bacterial ribosomal protein bL28 family.

The polypeptide is Large ribosomal subunit protein bL28 (Streptococcus gordonii (strain Challis / ATCC 35105 / BCRC 15272 / CH1 / DL1 / V288)).